We begin with the raw amino-acid sequence, 657 residues long: N-acetylgalactosaminyltransferase 7 (657 aa).

Residues 1–6 lie on the Cytoplasmic side of the membrane; it reads MRLKIG. The helical; Signal-anchor for type II membrane protein transmembrane segment at 7–29 threads the bilayer; sequence FILRSLLVVGSFLGLVVLWSSLS. The tract at residues 30-66 is disordered; it reads SRPDDPSPLSRMREDRDVNNPLPNRGGNGLAPGDDRF. Topologically, residues 30 to 657 are lumenal; sequence SRPDDPSPLS…KWEMNNIHSV (628 aa). 5 disulfide bridges follow: C197–C435, C426–C507, C545–C562, C585–C600, and C625–C640. The catalytic subdomain A stretch occupies residues 206-317; it reads LLTSSVVIVF…VNWYAPLVAP (112 aa). Substrate-binding residues include D247 and R277. Mn(2+)-binding residues include D301 and H303. Residues 381 to 443 are catalytic subdomain B; it reads PYRSPAMAGG…PCSRVGHIYR (63 aa). W412 serves as a coordination point for substrate. H440 provides a ligand contact to Mn(2+). Position 443 (R443) interacts with substrate. The 121-residue stretch at 532–652 folds into the Ricin B-type lectin domain; sequence VEWGEIRGLE…GKMTQKWEMN (121 aa).

It belongs to the glycosyltransferase 2 family. GalNAc-T subfamily. Mn(2+) serves as cofactor. Highly expressed in sublingual gland. Expressed at lower level in stomach, small intestiine and colon.

Its subcellular location is the golgi apparatus membrane. It carries out the reaction L-seryl-[protein] + UDP-N-acetyl-alpha-D-galactosamine = a 3-O-[N-acetyl-alpha-D-galactosaminyl]-L-seryl-[protein] + UDP + H(+). The catalysed reaction is L-threonyl-[protein] + UDP-N-acetyl-alpha-D-galactosamine = a 3-O-[N-acetyl-alpha-D-galactosaminyl]-L-threonyl-[protein] + UDP + H(+). It functions in the pathway protein modification; protein glycosylation. Its function is as follows. Glycopeptide transferase involved in O-linked oligosaccharide biosynthesis, which catalyzes the transfer of an N-acetyl-D-galactosamine residue to an already glycosylated peptide. In contrast to other proteins of the family, it does not act as a peptide transferase that transfers GalNAc onto serine or threonine residue on the protein receptor, but instead requires the prior addition of a GalNAc on a peptide before adding additional GalNAc moieties. Some peptide transferase activity is however not excluded, considering that its appropriate peptide substrate may remain unidentified. The protein is N-acetylgalactosaminyltransferase 7 (Galnt7) of Rattus norvegicus (Rat).